Reading from the N-terminus, the 185-residue chain is Ribosome-recycling factor (185 aa).

This sequence belongs to the RRF family.

The protein resides in the cytoplasm. In terms of biological role, responsible for the release of ribosomes from messenger RNA at the termination of protein biosynthesis. May increase the efficiency of translation by recycling ribosomes from one round of translation to another. This chain is Ribosome-recycling factor, found in Aromatoleum aromaticum (strain DSM 19018 / LMG 30748 / EbN1) (Azoarcus sp. (strain EbN1)).